The chain runs to 1045 residues: Endoglucanase B (1045 aa).

The signal sequence occupies residues Met1 to Ala33. The segment at Ala34 to Pro492 is catalytic. The active-site Nucleophile is Asp91. Residues His410, Asp449, and Glu458 contribute to the active site. The CBM3 domain occupies Asp493–Thr642. Linker ('hinge') (Pro-Thr box) stretches follow at residues Thr644–Pro650, Ala734–Pro748, Ala831–Ala846, and Ser931–Pro944. Fibronectin type-III domains follow at residues Thr653 to Thr743, Thr751 to Pro840, and Val849 to Val940. Positions Pro939 to Gly1045 constitute a CBM2 domain. Cys946 and Cys1044 are disulfide-bonded.

The protein belongs to the glycosyl hydrolase 9 (cellulase E) family.

It catalyses the reaction Endohydrolysis of (1-&gt;4)-beta-D-glucosidic linkages in cellulose, lichenin and cereal beta-D-glucans.. The biological conversion of cellulose to glucose generally requires three types of hydrolytic enzymes: (1) Endoglucanases which cut internal beta-1,4-glucosidic bonds; (2) Exocellobiohydrolases that cut the disaccharide cellobiose from the non-reducing end of the cellulose polymer chain; (3) Beta-1,4-glucosidases which hydrolyze the cellobiose and other short cello-oligosaccharides to glucose. This is Endoglucanase B (cenB) from Cellulomonas fimi.